Consider the following 572-residue polypeptide: BOS complex subunit ncln (572 aa).

Residues 1 to 35 (MFEEAGEVLENMLKVSFPLSLVLFLVLVCPLRAEA) form the signal peptide. Topologically, residues 36–530 (AHEFSVYRMQ…TMNAYRVKPA (495 aa)) are extracellular. N-linked (GlcNAc...) asparagine glycans are attached at residues asparagine 108, asparagine 234, and asparagine 436. A helical transmembrane segment spans residues 531–551 (IFDLLLAVCIASYLGVLYLAI). Residues 552–572 (QNFGLLYGFLRRVTAPRVKQH) are Cytoplasmic-facing.

It belongs to the nicastrin family. In terms of assembly, component of the multi-pass translocon (MPT) complex.

It is found in the endoplasmic reticulum membrane. In terms of biological role, component of the multi-pass translocon (MPT) complex that mediates insertion of multi-pass membrane proteins into the lipid bilayer of membranes. The MPT complex takes over after the SEC61 complex: following membrane insertion of the first few transmembrane segments of proteins by the SEC61 complex, the MPT complex occludes the lateral gate of the SEC61 complex to promote insertion of subsequent transmembrane regions. Antagonizes Nodal signaling and subsequent organization of axial structures during mesodermal patterning. Ectopic expression results in cyclopia, due to a defect in mesendoderm patterning. The sequence is that of BOS complex subunit ncln (ncln) from Danio rerio (Zebrafish).